Here is a 197-residue protein sequence, read N- to C-terminus: Phosphoheptose isomerase (197 aa).

The region spanning Met-34–Gln-196 is the SIS domain. Asn-49–Gly-51 is a binding site for substrate. His-58 and Glu-62 together coordinate Zn(2+). Residues Glu-62, Asn-91–Asp-92, Ser-117–Ser-119, Ser-122, and Gln-172 each bind substrate. Zn(2+) contacts are provided by Gln-172 and His-180.

It belongs to the SIS family. GmhA subfamily. As to quaternary structure, homotetramer. Requires Zn(2+) as cofactor.

The protein resides in the cytoplasm. It catalyses the reaction 2 D-sedoheptulose 7-phosphate = D-glycero-alpha-D-manno-heptose 7-phosphate + D-glycero-beta-D-manno-heptose 7-phosphate. Its pathway is carbohydrate biosynthesis; D-glycero-D-manno-heptose 7-phosphate biosynthesis; D-glycero-alpha-D-manno-heptose 7-phosphate and D-glycero-beta-D-manno-heptose 7-phosphate from sedoheptulose 7-phosphate: step 1/1. Catalyzes the isomerization of sedoheptulose 7-phosphate in D-glycero-D-manno-heptose 7-phosphate. The polypeptide is Phosphoheptose isomerase (Shewanella halifaxensis (strain HAW-EB4)).